The following is a 74-amino-acid chain: Amphipathic peptide CT1 (74 aa).

The first 23 residues, 1-23 (MKTQIVILFISMIMLQMFVQIEG), serve as a signal peptide directing secretion. Residue valine 37 is modified to Valine amide. Positions 41 to 74 (GLRNLDDLDDLDLDHLFDSDVSDADLRLLKQMFR) are excised as a propeptide.

It belongs to the non-disulfide-bridged peptide (NDBP) superfamily. Short antimicrobial peptide (group 4) family. Expressed by the venom gland.

The protein resides in the secreted. Its subcellular location is the target cell membrane. Antimicrobial peptide that is rapidly bactericidal against Gram-positive bacteria (MIC=12.5 ug/ml against S.aureus, and MIC=100 ug/ml against M.luteus). Is also active against clinical antibiotics-resistant bacterial strains. The chain is Amphipathic peptide CT1 from Scorpiops tibetanus (Scorpion).